We begin with the raw amino-acid sequence, 178 residues long: MAILDILVYPDPRLREVAAPVAQVDDDIRRLADDMLETMYDAQGIGLAATQVGVNQRVVVMDLAEEGARQPLVLINPEILDREGAATGQEGCLSIPGFYEDVERAERIRFRALDREGRPWEQEAEGLMAVCVQHEIDHLDGKLFVDYLSELKRKRIRRKLEKLVRQGRVNVGGQTGRA.

Cysteine 92 and histidine 134 together coordinate Fe cation. Glutamate 135 is an active-site residue. Histidine 138 is a Fe cation binding site.

Belongs to the polypeptide deformylase family. The cofactor is Fe(2+).

The catalysed reaction is N-terminal N-formyl-L-methionyl-[peptide] + H2O = N-terminal L-methionyl-[peptide] + formate. Removes the formyl group from the N-terminal Met of newly synthesized proteins. Requires at least a dipeptide for an efficient rate of reaction. N-terminal L-methionine is a prerequisite for activity but the enzyme has broad specificity at other positions. This Alkalilimnicola ehrlichii (strain ATCC BAA-1101 / DSM 17681 / MLHE-1) protein is Peptide deformylase.